The sequence spans 350 residues: Anthranilate phosphoribosyltransferase (350 aa).

5-phospho-alpha-D-ribose 1-diphosphate contacts are provided by residues glycine 94, 97 to 98 (GD), threonine 102, 104 to 107 (NIST), 122 to 130 (KHGNRAVSS), and serine 134. Glycine 94 provides a ligand contact to anthranilate. Serine 106 is a Mg(2+) binding site. Position 125 (asparagine 125) interacts with anthranilate. An anthranilate-binding site is contributed by arginine 180. The Mg(2+) site is built by aspartate 239 and glutamate 240.

It belongs to the anthranilate phosphoribosyltransferase family. As to quaternary structure, homodimer. Mg(2+) is required as a cofactor.

The catalysed reaction is N-(5-phospho-beta-D-ribosyl)anthranilate + diphosphate = 5-phospho-alpha-D-ribose 1-diphosphate + anthranilate. The protein operates within amino-acid biosynthesis; L-tryptophan biosynthesis; L-tryptophan from chorismate: step 2/5. Catalyzes the transfer of the phosphoribosyl group of 5-phosphorylribose-1-pyrophosphate (PRPP) to anthranilate to yield N-(5'-phosphoribosyl)-anthranilate (PRA). The polypeptide is Anthranilate phosphoribosyltransferase (Geobacter sulfurreducens (strain ATCC 51573 / DSM 12127 / PCA)).